A 194-amino-acid polypeptide reads, in one-letter code: uncharacterized protein (194 aa).

A disordered region spans residues 45–138; the sequence is QLLGVPEQHR…AGPPRGDWGV (94 aa). Phosphoserine is present on residues Ser69 and Ser76. Residues 97–106 are compositionally biased toward pro residues; that stretch reads PPLPPPPVLP. The segment covering 107–116 has biased composition (low complexity); the sequence is GPGEELPGAR. Positions 117–128 are enriched in gly residues; it reads LPGGGGDDGAGR.

This is an uncharacterized protein from Homo sapiens (Human).